Reading from the N-terminus, the 342-residue chain is Phosphate acyltransferase (342 aa).

Belongs to the PlsX family. As to quaternary structure, homodimer. Probably interacts with PlsY.

It is found in the cytoplasm. It carries out the reaction a fatty acyl-[ACP] + phosphate = an acyl phosphate + holo-[ACP]. Its pathway is lipid metabolism; phospholipid metabolism. Catalyzes the reversible formation of acyl-phosphate (acyl-PO(4)) from acyl-[acyl-carrier-protein] (acyl-ACP). This enzyme utilizes acyl-ACP as fatty acyl donor, but not acyl-CoA. This Legionella pneumophila (strain Paris) protein is Phosphate acyltransferase.